Here is a 559-residue protein sequence, read N- to C-terminus: DNA ligase (559 aa).

E248 lines the ATP pocket. K250 (N6-AMP-lysine intermediate) is an active-site residue. Residues R255, R270, E300, F341, R417, and K423 each coordinate ATP.

Belongs to the ATP-dependent DNA ligase family. Mg(2+) serves as cofactor.

The enzyme catalyses ATP + (deoxyribonucleotide)n-3'-hydroxyl + 5'-phospho-(deoxyribonucleotide)m = (deoxyribonucleotide)n+m + AMP + diphosphate.. Its function is as follows. DNA ligase that seals nicks in double-stranded DNA during DNA replication, DNA recombination and DNA repair. The sequence is that of DNA ligase from Methanopyrus kandleri (strain AV19 / DSM 6324 / JCM 9639 / NBRC 100938).